Consider the following 592-residue polypeptide: MFVLPPPPPRYTVPVAYAAGASNGMAVPIVETNNIITHPEKGCPLQVGEGTYQLQDDLHLATPPPHPSEAPIINPNPLATVPNPPTSGVKLSLISLGLRNKTAFPSKVQVTARPFGDGNSALAAAPVKDPSKKRKPKNNIIKSSSSFVSRVIIHEATTKRLNDRDPEGLFAFANINRAFQWLDLSSKHKDEPLSKILFTKAHMISHDVNEITKSSAHIDVIMGSSAGDIFWYEPISQKYARINKNGIINSSPVTHIKWIPGSENFFIAAHENGQLVVYDKEKEDALFIPELPEQSAESVKPSRWSLQVLKSVNSKNQKANPVAVWRLANQKITQFAFSPDHRHLAVVLEDGTLRLMDYLQEEVLDVFRSYYGGFTCVCWSPDGKYIVTGGQDDLVTIWSLPERKIIARCQGHDSWVSAVAFDPWRCDERTYRIGSVGDDCNLLLWDFSVGMLHRPKVHHQTSARHRTSLIAPSSQQPNRHRADSSGNRMRSDSQRTAADSESAPDQPVQHPVESRARTALLPPIMSKAVGEDPICWLGFQEDTIMTSSLEGHIRTWDRPRENISDNYGDQKSSETLGTGKEAGHPASSMGSL.

Positions 119-140 are disordered; the sequence is NSALAAAPVKDPSKKRKPKNNI. 4 WD repeats span residues 248 to 288, 327 to 368, 369 to 408, and 411 to 455; these read INSS…ALFI, LANQ…DVFR, SYYGGFTCVCWSPDGKYIVTGGQDDLVTIWSLPERKIIAR, and GHDS…LHRP. Disordered stretches follow at residues 459–513 and 556–592; these read HQTS…HPVE and WDRPRENISDNYGDQKSSETLGTGKEAGHPASSMGSL. Composition is skewed to polar residues over residues 484-499 and 564-576; these read SSGNRMRSDSQRTAAD and SDNYGDQKSSETL. Residues 529-566 form a WD 5 repeat; sequence VGEDPICWLGFQEDTIMTSSLEGHIRTWDRPRENISDN.

This sequence belongs to the WD repeat creC family. Interacts with creB.

Component of the regulatory network controlling carbon source utilization through ubiquitination and deubiquitination involving creA, creB, creC, creD and acrB. Required to prevent the proteolysis of the CreB deubiquitinating enzyme in the absence of carbon catabolite repression. CreB deubiquitinating enzyme stabilized in a complex with the CreC leads to the expression of genes such as those in the proline and quinate pathways. This chain is Catabolite repression protein creC (creC), found in Emericella nidulans (strain FGSC A4 / ATCC 38163 / CBS 112.46 / NRRL 194 / M139) (Aspergillus nidulans).